The following is a 399-amino-acid chain: Guanine nucleotide-binding protein negative regulator 1 (399 aa).

WD repeat units follow at residues 44–83, 105–145, 150–194, 207–247, 252–292, and 296–337; these read KPLNFFHSSRWSPDGSTILSLTEDQCLNCWNVPFSDLSKK, YSYS…NKAS, DHQE…VMTT, SLKG…PCQL, ERGN…DMVY, and GHRG…EETH.

As to quaternary structure, interacts with gpa1.

The protein resides in the cytoplasm. Its function is as follows. Negatively regulates the pheromone-response pathway. Acts as a structural mimic of the G protein beta subunit thereby interacting with gpa1 which then inhibits gpa1 signaling. The sequence is that of Guanine nucleotide-binding protein negative regulator 1 (gnr1) from Schizosaccharomyces pombe (strain 972 / ATCC 24843) (Fission yeast).